The chain runs to 351 residues: Inositol monophosphatase 3 (351 aa).

The helical transmembrane segment at 11 to 31 (LGIGVFCLLALGVLYHVYSGF) threads the bilayer. 5 residues coordinate Mg(2+): glutamate 121, aspartate 162, leucine 164, aspartate 165, and aspartate 288. Substrate is bound at residue glutamate 121. Substrate-binding positions include 164–167 (LDAT) and aspartate 288.

This sequence belongs to the inositol monophosphatase superfamily. The cofactor is Mg(2+).

It is found in the membrane. It carries out the reaction a myo-inositol phosphate + H2O = myo-inositol + phosphate. It functions in the pathway polyol metabolism; myo-inositol biosynthesis; myo-inositol from D-glucose 6-phosphate: step 2/2. In Xenopus laevis (African clawed frog), this protein is Inositol monophosphatase 3 (bpnt2).